Consider the following 199-residue polypeptide: Transcriptional regulatory protein DesR (199 aa).

The 115-residue stretch at 3-117 folds into the Response regulatory domain; the sequence is SIFIAEDQQM…ELANAIRSVM (115 aa). Residue Asp54 is modified to 4-aspartylphosphate. The HTH luxR-type domain occupies 131 to 196; that stretch reads LYSEANPLTD…EAITRSKEKG (66 aa). A DNA-binding region (H-T-H motif) is located at residues 155–174; that stretch reads TKEIAQELSIKSGTVRNYIS.

Post-translationally, phosphorylated by DesK.

Its subcellular location is the cytoplasm. In terms of biological role, member of the two-component regulatory system DesR/DesK, responsible for cold induction of the des gene coding for the Delta5 acyl-lipid desaturase. The chain is Transcriptional regulatory protein DesR (desR) from Bacillus subtilis (strain 168).